Here is a 273-residue protein sequence, read N- to C-terminus: 3-methyl-2-oxobutanoate hydroxymethyltransferase (273 aa).

Residues D53 and D92 each coordinate Mg(2+). Residues 53–54 (DS), D92, and K122 contribute to the 3-methyl-2-oxobutanoate site. E124 is a binding site for Mg(2+). E191 (proton acceptor) is an active-site residue.

The protein belongs to the PanB family. Homodecamer; pentamer of dimers. Mg(2+) is required as a cofactor.

It is found in the cytoplasm. The catalysed reaction is 3-methyl-2-oxobutanoate + (6R)-5,10-methylene-5,6,7,8-tetrahydrofolate + H2O = 2-dehydropantoate + (6S)-5,6,7,8-tetrahydrofolate. The protein operates within cofactor biosynthesis; (R)-pantothenate biosynthesis; (R)-pantoate from 3-methyl-2-oxobutanoate: step 1/2. Functionally, catalyzes the reversible reaction in which hydroxymethyl group from 5,10-methylenetetrahydrofolate is transferred onto alpha-ketoisovalerate to form ketopantoate. This is 3-methyl-2-oxobutanoate hydroxymethyltransferase from Phocaeicola vulgatus (strain ATCC 8482 / DSM 1447 / JCM 5826 / CCUG 4940 / NBRC 14291 / NCTC 11154) (Bacteroides vulgatus).